The sequence spans 671 residues: MAPKGKVYRGSVKDFPGFNASQDADALCNAMKGFGSDKDAILDLITSRSNKQRLEICQAYKSQYGKDLIADLKYELTGKFERLIVSLMRPPAYSDAKEIKDAIAGIGTDEKCLIEILASRTNQEIHDLVAAYKDAYERDLEADVVGDTSGHFKKMLVVLLQGAREEDDVVSEDLVEQDAKDLLEAGELKWGTDEAQFIYILGRRSKQHLRMVFDEYLKISGKPIERSIRAELSGDFEKLKLAVVKCVRSTAEYFAERLYKAMKGLGTRDNTLIHIMVSRSEIDMLDIREVFRTKYDKSLHNMIKEDTSGEYKKALLKLCEGDDDAAAEFFPEAAQVAYRMWELSAVAKVELRGTVQPASNFNDDGDAQVLRKAMKGLGTDEGAIIEVLTQRSNAQRQQILKAYKAHYGRDLLADLKSELSGSLANLILGLMLTPAQYDAKQLRKAVEGDGTDESTLVEIMATRNNQEIAAINEAYQQAYHKSLEDDLSSDTSVHFKRLLVSLALGNRDEGPENLTQAHEDAKVVAETLKLADVPSNDSSDSLETRFLSILCTRSYPHLRRVFQEFVKMTNHDVEHAIRKRMSGDVRDAFVAIVRSVKNKPAFFADKLYKSMKGAGTDERTLTRIMISRSEIDLLNIRGEFIDLFDKSLYQMIEKDSGDYCKALLALCGGDD.

Annexin repeat units follow at residues 18–89 (FNAS…SLMR), 90–161 (PPAY…VLLQ), 173–245 (DLVE…AVVK), 249–320 (STAE…KLCE), 361–432 (FNDD…GLML), 433–504 (TPAQ…SLAL), 519–594 (EDAK…AIVR), and 598–669 (NKPA…LCGG).

The protein belongs to the annexin family.

The protein localises to the cytoplasm. It is found in the melanosome. In terms of biological role, may associate with CD21. May regulate the release of Ca(2+) from intracellular stores. In Gallus gallus (Chicken), this protein is Annexin A6 (ANXA6).